The sequence spans 202 residues: ATP-dependent Clp protease proteolytic subunit (202 aa).

Residue serine 98 is the Nucleophile of the active site. Histidine 123 is an active-site residue.

This sequence belongs to the peptidase S14 family. In terms of assembly, fourteen ClpP subunits assemble into 2 heptameric rings which stack back to back to give a disk-like structure with a central cavity, resembling the structure of eukaryotic proteasomes.

The protein resides in the cytoplasm. The enzyme catalyses Hydrolysis of proteins to small peptides in the presence of ATP and magnesium. alpha-casein is the usual test substrate. In the absence of ATP, only oligopeptides shorter than five residues are hydrolyzed (such as succinyl-Leu-Tyr-|-NHMec, and Leu-Tyr-Leu-|-Tyr-Trp, in which cleavage of the -Tyr-|-Leu- and -Tyr-|-Trp bonds also occurs).. Functionally, cleaves peptides in various proteins in a process that requires ATP hydrolysis. Has a chymotrypsin-like activity. Plays a major role in the degradation of misfolded proteins. The protein is ATP-dependent Clp protease proteolytic subunit of Syntrophobacter fumaroxidans (strain DSM 10017 / MPOB).